Reading from the N-terminus, the 340-residue chain is Uroporphyrinogen decarboxylase (340 aa).

Substrate-binding positions include 21 to 25 (RQAGR), aspartate 71, tyrosine 148, serine 203, and histidine 316.

It belongs to the uroporphyrinogen decarboxylase family. In terms of assembly, homodimer.

The protein localises to the cytoplasm. It catalyses the reaction uroporphyrinogen III + 4 H(+) = coproporphyrinogen III + 4 CO2. The protein operates within porphyrin-containing compound metabolism; protoporphyrin-IX biosynthesis; coproporphyrinogen-III from 5-aminolevulinate: step 4/4. Catalyzes the decarboxylation of four acetate groups of uroporphyrinogen-III to yield coproporphyrinogen-III. This chain is Uroporphyrinogen decarboxylase, found in Campylobacter lari (strain RM2100 / D67 / ATCC BAA-1060).